Here is a 338-residue protein sequence, read N- to C-terminus: Probable tRNA pseudouridine synthase B (338 aa).

The active-site Nucleophile is the D78. Residues 245-320 (LPKIILRDSA…IAASPIRVLM (76 aa)) form the PUA domain.

It belongs to the pseudouridine synthase TruB family. Type 2 subfamily.

It catalyses the reaction uridine(55) in tRNA = pseudouridine(55) in tRNA. Could be responsible for synthesis of pseudouridine from uracil-55 in the psi GC loop of transfer RNAs. The polypeptide is Probable tRNA pseudouridine synthase B (Methanosarcina mazei (strain ATCC BAA-159 / DSM 3647 / Goe1 / Go1 / JCM 11833 / OCM 88) (Methanosarcina frisia)).